The chain runs to 152 residues: MGLSTLEQKLTEMITAPVEALGYELVGIEFIRGRTSTLRIYIDSEDGINVDDCADVSHQVSAVLDVEDPISVAYNLEVSSPGLDRPMFTADHYARFQGEEVALVLRMAVQNRRKWQGIIKAVDGEMITVTVEGKDEVFALSNIQKANLVPHF.

The protein belongs to the RimP family.

Its subcellular location is the cytoplasm. Its function is as follows. Required for maturation of 30S ribosomal subunits. The sequence is that of Ribosome maturation factor RimP from Salmonella arizonae (strain ATCC BAA-731 / CDC346-86 / RSK2980).